A 365-amino-acid polypeptide reads, in one-letter code: Aminomethyltransferase (365 aa).

It belongs to the GcvT family. In terms of assembly, the glycine cleavage system is composed of four proteins: P, T, L and H.

It carries out the reaction N(6)-[(R)-S(8)-aminomethyldihydrolipoyl]-L-lysyl-[protein] + (6S)-5,6,7,8-tetrahydrofolate = N(6)-[(R)-dihydrolipoyl]-L-lysyl-[protein] + (6R)-5,10-methylene-5,6,7,8-tetrahydrofolate + NH4(+). Its function is as follows. The glycine cleavage system catalyzes the degradation of glycine. This chain is Aminomethyltransferase, found in Erwinia tasmaniensis (strain DSM 17950 / CFBP 7177 / CIP 109463 / NCPPB 4357 / Et1/99).